Here is an 870-residue protein sequence, read N- to C-terminus: Protein RRP6-like 2 (870 aa).

In terms of domain architecture, 3'-5' exonuclease spans 263-428 (VQEVKDLKEL…YIYDLIKLEL (166 aa)). The 81-residue stretch at 479–559 (NAAQLAIVAG…RQSMQHYAAF (81 aa)) folds into the HRDC domain. Disordered stretches follow at residues 583-605 (SEKK…SSQL), 649-668 (GALL…EKVK), 688-775 (TEKV…EDEP), and 821-870 (FGEG…SFKN). Composition is skewed to basic and acidic residues over residues 720–729 (SKEDGVKELK) and 821–834 (FGEG…KREA). The span at 840–849 (KGSTQEQSEF) shows a compositional bias: polar residues.

It localises to the nucleus. Its subcellular location is the nucleolus. The protein localises to the cytoplasm. Its function is as follows. Acts as an important epigenetic regulator through multiple silencing mechanisms. Involved in association with RRP6L1 in the silencing of the solo LTR locus. Controls levels of non-coding RNAs (ncRNAs) from the solo LTR locus. Seems to function independently of the RNA-mediated gene silencing (RdDM) pathway. Functions redundantly with RRP6L1 in the regulation of FLC locus. Participates in the maintenance of trimethylated 'Lys-27' (H3K27me3) at FLC locus via the regulation of antisense long non-coding RNAs (lncRNAs) and the regulation of diverse antisense RNAs derived from the FLC locus. Seems not involved in the exosomal RNA degradation. May be involved in poly(A)-mediated RNA degradation. This chain is Protein RRP6-like 2, found in Arabidopsis thaliana (Mouse-ear cress).